A 381-amino-acid chain; its full sequence is Putative 8-amino-7-oxononanoate synthase (381 aa).

R20 lines the substrate pocket. A pyridoxal 5'-phosphate-binding site is contributed by G107–Y108. H132 lines the substrate pocket. Pyridoxal 5'-phosphate contacts are provided by residues S180, D205–H208, and T236–K239. K239 bears the N6-(pyridoxal phosphate)lysine mark. T351 serves as a coordination point for substrate.

This sequence belongs to the class-II pyridoxal-phosphate-dependent aminotransferase family. BioF subfamily. Homodimer. It depends on pyridoxal 5'-phosphate as a cofactor.

It carries out the reaction 6-carboxyhexanoyl-[ACP] + L-alanine + H(+) = (8S)-8-amino-7-oxononanoate + holo-[ACP] + CO2. It functions in the pathway cofactor biosynthesis; biotin biosynthesis. In terms of biological role, catalyzes the decarboxylative condensation of pimeloyl-[acyl-carrier protein] and L-alanine to produce 8-amino-7-oxononanoate (AON), [acyl-carrier protein], and carbon dioxide. The protein is Putative 8-amino-7-oxononanoate synthase (bioF) of Rippkaea orientalis (strain PCC 8801 / RF-1) (Cyanothece sp. (strain PCC 8801)).